Reading from the N-terminus, the 192-residue chain is Protein GrpE (192 aa).

The segment covering 1 to 20 has biased composition (basic and acidic residues); sequence MEERNEQVVEEVKEEVKEAQ. The disordered stretch occupies residues 1 to 34; it reads MEERNEQVVEEVKEEVKEAQVEEAVTSEDSEETV. A compositionally biased stretch (acidic residues) spans 25 to 34; it reads VTSEDSEETV.

It belongs to the GrpE family. Homodimer.

The protein localises to the cytoplasm. Functionally, participates actively in the response to hyperosmotic and heat shock by preventing the aggregation of stress-denatured proteins, in association with DnaK and GrpE. It is the nucleotide exchange factor for DnaK and may function as a thermosensor. Unfolded proteins bind initially to DnaJ; upon interaction with the DnaJ-bound protein, DnaK hydrolyzes its bound ATP, resulting in the formation of a stable complex. GrpE releases ADP from DnaK; ATP binding to DnaK triggers the release of the substrate protein, thus completing the reaction cycle. Several rounds of ATP-dependent interactions between DnaJ, DnaK and GrpE are required for fully efficient folding. This is Protein GrpE from Bacillus cereus (strain AH187).